A 188-amino-acid chain; its full sequence is Hemophore HasA (188 aa).

Positions 32 and 75 each coordinate heme.

Monomer.

The protein localises to the secreted. In terms of biological role, can bind free heme and also acquire it from hemoglobin. Conveys heme from hemoglobin to the HasR receptor which releases it into the bacterium. HasR alone can take up heme but the synergy between HasA and HasR increases heme uptake 100-fold. This is Hemophore HasA (hasA) from Serratia marcescens.